Here is an 880-residue protein sequence, read N- to C-terminus: Valine--tRNA ligase (880 aa).

The short motif at 49 to 59 (PNVTGKLHLGH) is the 'HIGH' region element. The 'KMSKS' region motif lies at 525 to 529 (KMSKS). Lys-528 contributes to the ATP binding site. A coiled-coil region spans residues 809 to 880 (LEGLINIEEE…VKARLAELKR (72 aa)).

This sequence belongs to the class-I aminoacyl-tRNA synthetase family. ValS type 1 subfamily. As to quaternary structure, monomer.

It is found in the cytoplasm. The enzyme catalyses tRNA(Val) + L-valine + ATP = L-valyl-tRNA(Val) + AMP + diphosphate. In terms of biological role, catalyzes the attachment of valine to tRNA(Val). As ValRS can inadvertently accommodate and process structurally similar amino acids such as threonine, to avoid such errors, it has a 'posttransfer' editing activity that hydrolyzes mischarged Thr-tRNA(Val) in a tRNA-dependent manner. This is Valine--tRNA ligase from Geobacillus kaustophilus (strain HTA426).